A 48-amino-acid chain; its full sequence is ATP synthase protein 8 (48 aa).

Residues 13–32 (LTYGFLLMITLLILFSQFFL) traverse the membrane as a helical segment.

It belongs to the ATPase protein 8 family. F-type ATPases have 2 components, CF(1) - the catalytic core - and CF(0) - the membrane proton channel. In yeast, the dimeric form of ATP synthase consists of 17 polypeptides: alpha, beta, gamma, delta, epsilon, 4 (B), 5 (OSCP), 6 (A), 8, 9 (C), d, E (Tim11), f, g, h, i/j and k.

The protein localises to the mitochondrion membrane. In terms of biological role, mitochondrial membrane ATP synthase (F(1)F(0) ATP synthase or Complex V) produces ATP from ADP in the presence of a proton gradient across the membrane which is generated by electron transport complexes of the respiratory chain. F-type ATPases consist of two structural domains, F(1) - containing the extramembraneous catalytic core and F(0) - containing the membrane proton channel, linked together by a central stalk and a peripheral stalk. During catalysis, ATP synthesis in the catalytic domain of F(1) is coupled via a rotary mechanism of the central stalk subunits to proton translocation. Part of the complex F(0) domain. Minor subunit located with subunit a in the membrane. The chain is ATP synthase protein 8 (ATP8) from Saccharomyces cerevisiae (strain ATCC 204508 / S288c) (Baker's yeast).